The chain runs to 156 residues: Small ribosomal subunit protein uS7 (156 aa).

It belongs to the universal ribosomal protein uS7 family. As to quaternary structure, part of the 30S ribosomal subunit. Contacts proteins S9 and S11.

One of the primary rRNA binding proteins, it binds directly to 16S rRNA where it nucleates assembly of the head domain of the 30S subunit. Is located at the subunit interface close to the decoding center, probably blocks exit of the E-site tRNA. The sequence is that of Small ribosomal subunit protein uS7 from Rhodopseudomonas palustris (strain BisA53).